The chain runs to 589 residues: DNA mismatch repair protein MutL (589 aa).

Disordered regions lie at residues Leu-330–Glu-355 and Arg-374–Thr-394. Over residues Gln-331–Pro-341 the composition is skewed to basic and acidic residues. Over residues Pro-381–Ala-390 the composition is skewed to pro residues.

This sequence belongs to the DNA mismatch repair MutL/HexB family.

Its function is as follows. This protein is involved in the repair of mismatches in DNA. It is required for dam-dependent methyl-directed DNA mismatch repair. May act as a 'molecular matchmaker', a protein that promotes the formation of a stable complex between two or more DNA-binding proteins in an ATP-dependent manner without itself being part of a final effector complex. The sequence is that of DNA mismatch repair protein MutL from Trichlorobacter lovleyi (strain ATCC BAA-1151 / DSM 17278 / SZ) (Geobacter lovleyi).